The following is a 433-amino-acid chain: Leucine-rich repeat extensin-like protein 7 (433 aa).

A signal peptide spans 1-21; it reads MRIYQPTLLIFTTVVLLSISA. A glycan (N-linked (GlcNAc...) asparagine) is linked at Asn71. LRR repeat units follow at residues 98–122, 123–145, 146–170, 171–194, 196–217, 219–239, 241–265, 266–289, and 290–313; these read VKTV…LGLL, TDIA…GFSQ, LSLL…VIGL, PKLK…LFDK, LDAL…MGNS, VSVL…SFGK, GKTL…MGLL, QNVT…MGQM, and ENLE…LCSL. The N-linked (GlcNAc...) asparagine glycan is linked to Asn267. Residue Asn340 is glycosylated (N-linked (GlcNAc...) asparagine). The interval 380–433 is disordered; it reads FSPPPSQISPSSQPLAPAPSPTSPPLSTPPPARPCPPVYSPPPPPPLSLAPSMN. The interval 381 to 433 is contains the Ser-Pro(4) repeats; it reads SPPPSQISPSSQPLAPAPSPTSPPLSTPPPARPCPPVYSPPPPPPLSLAPSMN. The span at 395-427 shows a compositional bias: pro residues; the sequence is APAPSPTSPPLSTPPPARPCPPVYSPPPPPPLS.

Hydroxylated on proline residues in the S-P-P-P-P repeat. Post-translationally, O-glycosylated on hydroxyprolines. As to expression, expressed in flowers and pollen.

The protein resides in the secreted. It localises to the cell wall. Modulates cell morphogenesis by regulating cell wall formation and assembly, and/or growth polarization. In Arabidopsis thaliana (Mouse-ear cress), this protein is Leucine-rich repeat extensin-like protein 7 (LRX7).